The following is a 638-amino-acid chain: Chaperone protein DnaK 2 (638 aa).

Position 199 is a phosphothreonine; by autocatalysis (Thr-199). Residues Ala-604–Val-626 are disordered. The span at Glu-613–Asp-624 shows a compositional bias: low complexity.

Belongs to the heat shock protein 70 family.

Acts as a chaperone. This is Chaperone protein DnaK 2 from Colwellia psychrerythraea (strain 34H / ATCC BAA-681) (Vibrio psychroerythus).